A 332-amino-acid polypeptide reads, in one-letter code: UDP-N-acetylenolpyruvoylglucosamine reductase (332 aa).

The 170-residue stretch at 15-184 (IDVSAACFLE…TYVSFRLSKR (170 aa)) folds into the FAD-binding PCMH-type domain. Arg-160 is a catalytic residue. The active-site Proton donor is Ser-232. Glu-328 is a catalytic residue.

This sequence belongs to the MurB family. FAD is required as a cofactor.

The protein resides in the cytoplasm. It carries out the reaction UDP-N-acetyl-alpha-D-muramate + NADP(+) = UDP-N-acetyl-3-O-(1-carboxyvinyl)-alpha-D-glucosamine + NADPH + H(+). It participates in cell wall biogenesis; peptidoglycan biosynthesis. Its function is as follows. Cell wall formation. This chain is UDP-N-acetylenolpyruvoylglucosamine reductase, found in Bacteroides fragilis (strain YCH46).